The chain runs to 511 residues: ATP synthase subunit alpha (511 aa).

An ATP-binding site is contributed by 169–176; the sequence is GDRKTGKT.

It belongs to the ATPase alpha/beta chains family. As to quaternary structure, F-type ATPases have 2 components, CF(1) - the catalytic core - and CF(0) - the membrane proton channel. CF(1) has five subunits: alpha(3), beta(3), gamma(1), delta(1), epsilon(1). CF(0) has three main subunits: a(1), b(2) and c(9-12). The alpha and beta chains form an alternating ring which encloses part of the gamma chain. CF(1) is attached to CF(0) by a central stalk formed by the gamma and epsilon chains, while a peripheral stalk is formed by the delta and b chains.

It localises to the cell membrane. It catalyses the reaction ATP + H2O + 4 H(+)(in) = ADP + phosphate + 5 H(+)(out). Its function is as follows. Produces ATP from ADP in the presence of a proton gradient across the membrane. The alpha chain is a regulatory subunit. The protein is ATP synthase subunit alpha of Latilactobacillus sakei subsp. sakei (strain 23K) (Lactobacillus sakei subsp. sakei).